Reading from the N-terminus, the 1279-residue chain is ATP-dependent helicase/nuclease subunit A (1279 aa).

The UvrD-like helicase ATP-binding domain occupies 4–499 (TKWTDEQRQA…VKLFKNFRSR (496 aa)). 25 to 32 (AGAGAGKT) serves as a coordination point for ATP. Positions 526–853 (EEALKVGASY…RIMSIHKSKG (328 aa)) constitute a UvrD-like helicase C-terminal domain.

This sequence belongs to the helicase family. AddA subfamily. Heterodimer of AddA and AddB/RexB. The cofactor is Mg(2+).

It carries out the reaction Couples ATP hydrolysis with the unwinding of duplex DNA by translocating in the 3'-5' direction.. It catalyses the reaction ATP + H2O = ADP + phosphate + H(+). In terms of biological role, the heterodimer acts as both an ATP-dependent DNA helicase and an ATP-dependent, dual-direction single-stranded exonuclease. Recognizes the chi site generating a DNA molecule suitable for the initiation of homologous recombination. The AddA nuclease domain is required for chi fragment generation; this subunit has the helicase and 3' -&gt; 5' nuclease activities. This Clostridium botulinum (strain Kyoto / Type A2) protein is ATP-dependent helicase/nuclease subunit A.